The following is a 378-amino-acid chain: Erythronate-4-phosphate dehydrogenase (378 aa).

2 residues coordinate substrate: S45 and T66. Residues D146 and T175 each coordinate NAD(+). The active site involves R208. D232 is a binding site for NAD(+). Residue E237 is part of the active site. H254 (proton donor) is an active-site residue. Position 257 (G257) interacts with NAD(+). Substrate is bound at residue Y258.

It belongs to the D-isomer specific 2-hydroxyacid dehydrogenase family. PdxB subfamily. Homodimer.

The protein resides in the cytoplasm. The catalysed reaction is 4-phospho-D-erythronate + NAD(+) = (R)-3-hydroxy-2-oxo-4-phosphooxybutanoate + NADH + H(+). The protein operates within cofactor biosynthesis; pyridoxine 5'-phosphate biosynthesis; pyridoxine 5'-phosphate from D-erythrose 4-phosphate: step 2/5. Its function is as follows. Catalyzes the oxidation of erythronate-4-phosphate to 3-hydroxy-2-oxo-4-phosphonooxybutanoate. The polypeptide is Erythronate-4-phosphate dehydrogenase (Escherichia coli O157:H7).